Here is a 278-residue protein sequence, read N- to C-terminus: Orotidine 5'-phosphate decarboxylase (278 aa).

Catalysis depends on lysine 95, which acts as the Proton donor.

This sequence belongs to the OMP decarboxylase family. Type 2 subfamily.

The catalysed reaction is orotidine 5'-phosphate + H(+) = UMP + CO2. The protein operates within pyrimidine metabolism; UMP biosynthesis via de novo pathway; UMP from orotate: step 2/2. This chain is Orotidine 5'-phosphate decarboxylase, found in Methylibium petroleiphilum (strain ATCC BAA-1232 / LMG 22953 / PM1).